The chain runs to 555 residues: Phosphoglucomutase (555 aa).

Alpha-D-glucose 1,6-bisphosphate is bound by residues Arg-22 and Ser-114. Ser-114 acts as the Phosphoserine intermediate in catalysis. Residues Ser-114, Asp-279, Asp-281, and Asp-283 each coordinate Mg(2+). The residue at position 114 (Ser-114) is a Phosphoserine. Residues Asp-283, Arg-284, Thr-347, Glu-366, Ser-368, and Lys-379 each coordinate alpha-D-glucose 1,6-bisphosphate.

The protein belongs to the phosphohexose mutase family. Monomer. Mg(2+) is required as a cofactor.

Its subcellular location is the cytoplasm. The enzyme catalyses alpha-D-glucose 1-phosphate = alpha-D-glucose 6-phosphate. It catalyses the reaction O-phospho-L-seryl-[protein] + alpha-D-glucose 1-phosphate = alpha-D-glucose 1,6-bisphosphate + L-seryl-[protein]. The catalysed reaction is alpha-D-glucose 1,6-bisphosphate + L-seryl-[protein] = O-phospho-L-seryl-[protein] + alpha-D-glucose 6-phosphate. Catalyzes the reversible isomerization of alpha-D-glucose 1-phosphate to alpha-D-glucose 6-phosphate. The mechanism proceeds via the intermediate compound alpha-D-glucose 1,6-bisphosphate. Key enzyme in hexose metabolism. The reverse reaction is an essential step for biosynthesis because glucose 1-phosphate is the starting point for the synthesis of UDP-glucose, which acts as a precursor for the synthesis of oligosaccharides and trehalose. The chain is Phosphoglucomutase (pgmA) from Aspergillus oryzae (strain ATCC 42149 / RIB 40) (Yellow koji mold).